A 42-amino-acid chain; its full sequence is Thymosin beta-10 (42 aa).

2 stretches are compositionally biased toward basic and acidic residues: residues 1–25 and 33–42; these read MADK…ETQE and ETIEQEKQAK. A disordered region spans residues 1–42; sequence MADKPDMGEINSFDKAKLKKTETQEKNTLPTKETIEQEKQAK. The residue at position 2 (Ala-2) is an N-acetylalanine. Lys-4 is modified (N6-acetyllysine). Residue Ser-12 is modified to Phosphoserine. N6-acetyllysine is present on Lys-15. Phosphothreonine occurs at positions 21, 23, and 34. At Lys-39 the chain carries N6-acetyllysine.

It belongs to the thymosin beta family.

The protein resides in the cytoplasm. Its subcellular location is the cytoskeleton. In terms of biological role, plays an important role in the organization of the cytoskeleton. Binds to and sequesters actin monomers (G actin) and therefore inhibits actin polymerization. This is Thymosin beta-10 (TMSB10) from Sus scrofa (Pig).